Consider the following 181-residue polypeptide: Transcriptional repressor NrdR (181 aa).

Residues 3–34 (CLFCQHTDTRVIDSRVSEDGATIRRRRECEAC) fold into a zinc finger. The ATP-cone domain occupies 49–139 (PVIIKKDGGR…VYRSFQDVAD (91 aa)).

The protein belongs to the NrdR family. Zn(2+) is required as a cofactor.

Its function is as follows. Negatively regulates transcription of bacterial ribonucleotide reductase nrd genes and operons by binding to NrdR-boxes. The polypeptide is Transcriptional repressor NrdR (Xylella fastidiosa (strain M12)).